The chain runs to 31 residues: Phospholipase A2 homolog P-elapitoxin-Aa1a beta chain (31 aa).

Belongs to the phospholipase A2 family. Group I subfamily. Heterotrimer of alpha, beta and gamma chains, each related to PLA2. In terms of tissue distribution, expressed by the venom gland.

It is found in the secreted. Heterotrimer: Snake venom phospholipase A2 (PLA2) that has presynaptic neurotoxicity. Inhibits nerve-evoked twitch contractions but not responses to cholinergic agonists acetylcholine and carbachol and to depolarizing agonist KCl. Causes a fade in tetanic contractions. Displays a triphasic mode of action with depression, enhancement and blockade of neurotransmission. Does not display myotoxic activity such as changes in baseline muscle tension or inhibition of directly stimulated muscle twitches. All subunits are necessary for maximum toxicity. In terms of biological role, monomer: The beta chain has no enzymatic activity and is not toxic by itself. In Acanthophis antarcticus (Common death adder), this protein is Phospholipase A2 homolog P-elapitoxin-Aa1a beta chain.